A 375-amino-acid chain; its full sequence is Lipid-A-disaccharide synthase (375 aa).

The protein belongs to the LpxB family.

The enzyme catalyses a lipid X + a UDP-2-N,3-O-bis[(3R)-3-hydroxyacyl]-alpha-D-glucosamine = a lipid A disaccharide + UDP + H(+). It participates in bacterial outer membrane biogenesis; LPS lipid A biosynthesis. Its function is as follows. Condensation of UDP-2,3-diacylglucosamine and 2,3-diacylglucosamine-1-phosphate to form lipid A disaccharide, a precursor of lipid A, a phosphorylated glycolipid that anchors the lipopolysaccharide to the outer membrane of the cell. The protein is Lipid-A-disaccharide synthase of Pseudomonas putida (strain W619).